The sequence spans 120 residues: Prophage bactoprenol-linked glucose translocase homolog (120 aa).

Residues 1-9 are Cytoplasmic-facing; it reads MLKLFAKYT. The helical transmembrane segment at 10–30 threads the bilayer; it reads SIGVLNTLIHWVVFGVCIYVA. Residues 31-33 lie on the Periplasmic side of the membrane; the sequence is HTN. Residues 34–54 form a helical membrane-spanning segment; the sequence is QALANFAGFVVAVSFSFFANA. The Cytoplasmic portion of the chain corresponds to 55-64; sequence KFTFKASTTT. A helical membrane pass occupies residues 65 to 85; it reads MRYMLYVGFMGTLSATVGWAA. Topologically, residues 86 to 88 are periplasmic; that stretch reads DRC. The chain crosses the membrane as a helical span at residues 89-109; the sequence is ALPPMITLVTFSAISLVCGFV. The Cytoplasmic portion of the chain corresponds to 110-120; that stretch reads YSKFIVFRDAK.

The protein belongs to the GtrA family.

The protein resides in the cell inner membrane. In terms of biological role, involved in O antigen modification. Involved in the translocation of bactoprenol-linked glucose across the cytoplasmic membrane. In Escherichia coli (strain K12), this protein is Prophage bactoprenol-linked glucose translocase homolog (yfdG).